Here is a 222-residue protein sequence, read N- to C-terminus: Peptide methionine sulfoxide reductase MsrA (222 aa).

The active site involves C60.

Belongs to the MsrA Met sulfoxide reductase family.

It catalyses the reaction L-methionyl-[protein] + [thioredoxin]-disulfide + H2O = L-methionyl-(S)-S-oxide-[protein] + [thioredoxin]-dithiol. The catalysed reaction is [thioredoxin]-disulfide + L-methionine + H2O = L-methionine (S)-S-oxide + [thioredoxin]-dithiol. Its function is as follows. Has an important function as a repair enzyme for proteins that have been inactivated by oxidation. Catalyzes the reversible oxidation-reduction of methionine sulfoxide in proteins to methionine. This chain is Peptide methionine sulfoxide reductase MsrA, found in Pseudomonas entomophila (strain L48).